The primary structure comprises 693 residues: Protein-glutamine gamma-glutamyltransferase E (693 aa).

At tyrosine 111 the chain carries Phosphotyrosine. The residue at position 112 (threonine 112) is a Phosphothreonine. Positions 222, 225, 227, and 228 each coordinate Ca(2+). Cysteine 273 is an active-site residue. Ca(2+) contacts are provided by aspartate 302, aspartate 304, asparagine 306, serine 308, and aspartate 325. Catalysis depends on residues histidine 331 and aspartate 354. 4 residues coordinate Ca(2+): asparagine 394, threonine 416, glutamate 444, and glutamate 449. A disordered region spans residues 455–482; sequence KAMNKLKPNASFGATSSRGPQGEEKEPS.

Belongs to the transglutaminase superfamily. Transglutaminase family. As to quaternary structure, consists of two polypeptide chains, which are synthesized as a precursor form of a single polypeptide. Ca(2+) is required as a cofactor. Activated by proteolytic processing. In vitro activation is commonly achieved by cleavage with dispase, a neutral bacterial protease. Physiological activation may be catalyzed by CTSL and, to a lesser extent, by CTSS.

The protein localises to the cytoplasm. The enzyme catalyses L-glutaminyl-[protein] + L-lysyl-[protein] = [protein]-L-lysyl-N(6)-5-L-glutamyl-[protein] + NH4(+). In terms of biological role, catalyzes the calcium-dependent formation of isopeptide cross-links between glutamine and lysine residues in various proteins, as well as the conjugation of polyamines to proteins. Involved in the formation of the cornified envelope (CE), a specialized component consisting of covalent cross-links of proteins beneath the plasma membrane of terminally differentiated keratinocytes. Catalyzes small proline-rich proteins and LOR cross-linking to form small interchain oligomers, which are further cross-linked by TGM1 onto the growing CE scaffold. In hair follicles, involved in cross-linking structural proteins to hardening the inner root sheath. In Rattus norvegicus (Rat), this protein is Protein-glutamine gamma-glutamyltransferase E (Tgm3).